Reading from the N-terminus, the 98-residue chain is Large ribosomal subunit protein bL27 (98 aa).

Residues 1–13 (MKKIWFHLDLQFF) constitute a propeptide that is removed on maturation.

The protein belongs to the bacterial ribosomal protein bL27 family. In terms of processing, the N-terminus is cleaved by ribosomal processing cysteine protease Prp.

This is Large ribosomal subunit protein bL27 from Mycoplasmoides gallisepticum (strain R(low / passage 15 / clone 2)) (Mycoplasma gallisepticum).